A 580-amino-acid polypeptide reads, in one-letter code: Adenine deaminase 2 (580 aa).

It belongs to the metallo-dependent hydrolases superfamily. Adenine deaminase family. Requires Mn(2+) as cofactor.

It catalyses the reaction adenine + H2O + H(+) = hypoxanthine + NH4(+). This chain is Adenine deaminase 2, found in Latilactobacillus sakei subsp. sakei (strain 23K) (Lactobacillus sakei subsp. sakei).